The sequence spans 242 residues: Floral homeotic protein AGAMOUS (242 aa).

One can recognise an MADS-box domain in the interval arginine 19–tyrosine 73. One can recognise a K-box domain in the interval alanine 103–serine 193.

As to expression, expressed exclusively in stamens and carpels.

The protein resides in the nucleus. Its function is as follows. Probable transcription factor involved in regulating genes that determines stamen and carpel development in wild-type flowers. The sequence is that of Floral homeotic protein AGAMOUS (AG1) from Petunia hybrida (Petunia).